The primary structure comprises 365 residues: Protein-glutamate methylesterase/protein-glutamine glutaminase 2 (365 aa).

The region spanning 18–135 (RVLIVDDSAM…GQGLPAIMRD (118 aa)) is the Response regulatory domain. Asp69 carries the post-translational modification 4-aspartylphosphate. The region spanning 162-355 (GASEDWIHAL…ARMMLAAAAD (194 aa)) is the CheB-type methylesterase domain. Residues Ser174, His200, and Asp297 contribute to the active site.

Belongs to the CheB family. Phosphorylated by CheA. Phosphorylation of the N-terminal regulatory domain activates the methylesterase activity.

It localises to the cytoplasm. The enzyme catalyses [protein]-L-glutamate 5-O-methyl ester + H2O = L-glutamyl-[protein] + methanol + H(+). It carries out the reaction L-glutaminyl-[protein] + H2O = L-glutamyl-[protein] + NH4(+). Involved in chemotaxis. Part of a chemotaxis signal transduction system that modulates chemotaxis in response to various stimuli. Catalyzes the demethylation of specific methylglutamate residues introduced into the chemoreceptors (methyl-accepting chemotaxis proteins or MCP) by CheR. Also mediates the irreversible deamidation of specific glutamine residues to glutamic acid. The sequence is that of Protein-glutamate methylesterase/protein-glutamine glutaminase 2 from Cereibacter sphaeroides (strain ATCC 17023 / DSM 158 / JCM 6121 / CCUG 31486 / LMG 2827 / NBRC 12203 / NCIMB 8253 / ATH 2.4.1.) (Rhodobacter sphaeroides).